The following is a 249-amino-acid chain: Probable transcriptional regulatory protein Tgr7_2237 (249 aa).

The protein belongs to the TACO1 family.

The protein resides in the cytoplasm. The chain is Probable transcriptional regulatory protein Tgr7_2237 from Thioalkalivibrio sulfidiphilus (strain HL-EbGR7).